Reading from the N-terminus, the 218-residue chain is Ribose-5-phosphate isomerase A (218 aa).

Substrate-binding positions include 27–30 (TGST), 80–83 (DGAD), and 93–96 (KGGG). Glu102 acts as the Proton acceptor in catalysis. Lys120 is a binding site for substrate.

It belongs to the ribose 5-phosphate isomerase family. In terms of assembly, homodimer.

It catalyses the reaction aldehydo-D-ribose 5-phosphate = D-ribulose 5-phosphate. The protein operates within carbohydrate degradation; pentose phosphate pathway; D-ribose 5-phosphate from D-ribulose 5-phosphate (non-oxidative stage): step 1/1. Catalyzes the reversible conversion of ribose-5-phosphate to ribulose 5-phosphate. In Picrophilus torridus (strain ATCC 700027 / DSM 9790 / JCM 10055 / NBRC 100828 / KAW 2/3), this protein is Ribose-5-phosphate isomerase A.